The following is a 59-amino-acid chain: Sperm protamine P1-type (59 aa).

Residues 1-59 are disordered; it reads MARYRRNRSRSRSRRRRRRRGGRGGRRGRRRRRHGQRRRGRRGRERTRRRRRRRRRSSS.

It belongs to the protamine P1 family. Testis.

The protein resides in the nucleus. The protein localises to the chromosome. In terms of biological role, protamines substitute for histones in the chromatin of sperm during the haploid phase of spermatogenesis. They compact sperm DNA into a highly condensed, stable and inactive complex. The sequence is that of Sperm protamine P1-type from Chrysemys picta bellii (Western painted turtle).